The following is a 416-amino-acid chain: Probable glucan 1,3-beta-glucosidase A (416 aa).

The signal sequence occupies residues 1–22 (MIFKFSQKALVALYLVVGLAEA). Glu211 functions as the Proton donor in the catalytic mechanism. 2 cysteine pairs are disulfide-bonded: Cys291–Cys415 and Cys316–Cys342. Glu308 serves as the catalytic Nucleophile. An N-linked (GlcNAc...) asparagine glycan is attached at Asn344.

This sequence belongs to the glycosyl hydrolase 5 (cellulase A) family. In terms of assembly, monomer. Requires Mn(2+) as cofactor.

It localises to the secreted. It carries out the reaction Successive hydrolysis of beta-D-glucose units from the non-reducing ends of (1-&gt;3)-beta-D-glucans, releasing alpha-glucose.. Its function is as follows. Beta-glucanases participate in the metabolism of beta-glucan, the main structural component of the cell wall. It could also function biosynthetically as a transglycosylase. This chain is Probable glucan 1,3-beta-glucosidase A (exgA), found in Aspergillus fumigatus (strain ATCC MYA-4609 / CBS 101355 / FGSC A1100 / Af293) (Neosartorya fumigata).